Consider the following 518-residue polypeptide: UNC5C-like protein (518 aa).

At M1–P10 the chain is on the extracellular side. A helical; Signal-anchor for type III membrane protein membrane pass occupies residues S11–L31. Residues R32 to L518 lie on the Cytoplasmic side of the membrane. In terms of domain architecture, ZU5 spans V102–A237. Residues Q186 to S400 form an interaction with RELA and NFKB1 region. Residues P208 to L235 are peptidase S68. Catalysis depends on residues H227 and S229. The region spanning Q415 to S494 is the Death domain.

It belongs to the unc-5 family. In terms of assembly, interacts with p65/RELA and NFKB1.

Its subcellular location is the membrane. The protein localises to the cytoplasm. Inhibits NF-kappa-B-dependent transcription by impairing NF-kappa-B binding to its targets. This chain is UNC5C-like protein (Unc5cl), found in Mus musculus (Mouse).